We begin with the raw amino-acid sequence, 570 residues long: Carotenoid cleavage dioxygenase 8, chloroplastic (570 aa).

The N-terminal 56 residues, 1–56 (MASLITTKAMMSHHHVLSSTRITTLYSDNSIGDQQIKTKPQVPHRLFARRIFGVTR), are a transit peptide targeting the chloroplast. Residues H254, H305, H372, and H563 each coordinate Fe cation.

This sequence belongs to the carotenoid oxygenase family. Fe(2+) serves as cofactor. Expressed in flowers, siliques, inflorescence stems, petiole and leaves, and at a much higher level in roots.

Its subcellular location is the plastid. It is found in the chloroplast. The catalysed reaction is 9-cis-10'-apo-beta-carotenal + 2 O2 = (2E,4E,6E)-7-hydroxy-4-methylhepta-2,4,6-trienal + (11R)-carlactone. It carries out the reaction all-trans-10'-apo-beta-carotenal + O2 = (2E,4E,6E)-4-methylocta-2,4,6-trienedial + 13-apo-beta-carotenone. In terms of biological role, involved in strigolactones biosynthesis by cleaving the C(27) 9-cis-10'-apo-beta-carotenal produced by CCD7. Produces the C(19) carlactone and a C(8) hydroxyaldehyde. Also shows lower activity with all-trans-10'-apo-beta-carotenal producing a C(9) dialdehyde and the C(18) 13-apo-beta-carotenone. Strigolactones are hormones that inhibit tillering and shoot branching through the MAX-dependent pathway, contribute to the regulation of shoot architectural response to phosphate-limiting conditions and function as rhizosphere signal that stimulates hyphal branching of arbuscular mycorrhizal fungi and trigger seed germination of root parasitic weeds. Also active on other carotenoid substrates like licopene or zeaxanthin. The sequence is that of Carotenoid cleavage dioxygenase 8, chloroplastic from Arabidopsis thaliana (Mouse-ear cress).